A 361-amino-acid chain; its full sequence is S-adenosylmethionine decarboxylase proenzyme (361 aa).

Catalysis depends on residues glutamate 13 and glutamate 16. Serine 73 acts as the Schiff-base intermediate with substrate; via pyruvic acid in catalysis. The residue at position 73 (serine 73) is a Pyruvic acid (Ser); by autocatalysis. The Proton donor; for catalytic activity role is filled by cysteine 87. Catalysis depends on proton acceptor; for processing activity residues serine 236 and histidine 249.

The protein belongs to the eukaryotic AdoMetDC family. It depends on pyruvate as a cofactor. Post-translationally, is synthesized initially as an inactive proenzyme. Formation of the active enzyme involves a self-maturation process in which the active site pyruvoyl group is generated from an internal serine residue via an autocatalytic post-translational modification. Two non-identical subunits are generated from the proenzyme in this reaction, and the pyruvate is formed at the N-terminus of the alpha chain, which is derived from the carboxyl end of the proenzyme. The post-translation cleavage follows an unusual pathway, termed non-hydrolytic serinolysis, in which the side chain hydroxyl group of the serine supplies its oxygen atom to form the C-terminus of the beta chain, while the remainder of the serine residue undergoes an oxidative deamination to produce ammonia and the pyruvoyl group blocking the N-terminus of the alpha chain.

It catalyses the reaction S-adenosyl-L-methionine + H(+) = S-adenosyl 3-(methylsulfanyl)propylamine + CO2. It participates in amine and polyamine biosynthesis; S-adenosylmethioninamine biosynthesis; S-adenosylmethioninamine from S-adenosyl-L-methionine: step 1/1. The chain is S-adenosylmethionine decarboxylase proenzyme (SAMDC1) from Nicotiana sylvestris (Wood tobacco).